Here is an 84-residue protein sequence, read N- to C-terminus: RNA-binding protein Hfq (84 aa).

Positions Asp11–Val71 constitute a Sm domain.

Belongs to the Hfq family. As to quaternary structure, homohexamer.

Functionally, RNA chaperone that binds small regulatory RNA (sRNAs) and mRNAs to facilitate mRNA translational regulation in response to envelope stress, environmental stress and changes in metabolite concentrations. Also binds with high specificity to tRNAs. This Methylobacterium nodulans (strain LMG 21967 / CNCM I-2342 / ORS 2060) protein is RNA-binding protein Hfq.